A 317-amino-acid polypeptide reads, in one-letter code: Ribonuclease Z (317 aa).

Residues His63, His65, Asp67, His68, His143, Asp214, and His272 each coordinate Zn(2+). Asp67 acts as the Proton acceptor in catalysis.

Belongs to the RNase Z family. Homodimer. Requires Zn(2+) as cofactor.

The catalysed reaction is Endonucleolytic cleavage of RNA, removing extra 3' nucleotides from tRNA precursor, generating 3' termini of tRNAs. A 3'-hydroxy group is left at the tRNA terminus and a 5'-phosphoryl group is left at the trailer molecule.. Its function is as follows. Zinc phosphodiesterase, which displays some tRNA 3'-processing endonuclease activity. Probably involved in tRNA maturation, by removing a 3'-trailer from precursor tRNA. The chain is Ribonuclease Z from Ligilactobacillus salivarius (strain UCC118) (Lactobacillus salivarius).